A 394-amino-acid chain; its full sequence is Probable purine permease 8 (394 aa).

Transmembrane regions (helical) follow at residues 45–65, 77–97, 113–133, 139–159, 172–192, 208–228, 247–267, 289–309, 315–335, and 344–364; these read WLRI…STIL, TWMG…FRFF, FSSF…VSAN, VGLL…QLAF, FTPF…LLVV, VIGI…LSLV, LVAY…FASG, TLAS…GLIF, FSNS…VIVF, and IFSI…HYLD. The segment at 373–394 is disordered; it reads TSPVGDPHLLPAEEGHTNIHSV. Over residues 383 to 394 the composition is skewed to basic and acidic residues; it reads PAEEGHTNIHSV.

It belongs to the purine permeases (TC 2.A.7.14) family.

The protein resides in the membrane. The sequence is that of Probable purine permease 8 (PUP8) from Arabidopsis thaliana (Mouse-ear cress).